Here is an 80-residue protein sequence, read N- to C-terminus: Phosphoribosylformylglycinamidine synthase subunit PurS (80 aa).

The protein belongs to the PurS family. In terms of assembly, homodimer. Part of the FGAM synthase complex composed of 1 PurL, 1 PurQ and 2 PurS subunits.

The protein resides in the cytoplasm. It catalyses the reaction N(2)-formyl-N(1)-(5-phospho-beta-D-ribosyl)glycinamide + L-glutamine + ATP + H2O = 2-formamido-N(1)-(5-O-phospho-beta-D-ribosyl)acetamidine + L-glutamate + ADP + phosphate + H(+). The protein operates within purine metabolism; IMP biosynthesis via de novo pathway; 5-amino-1-(5-phospho-D-ribosyl)imidazole from N(2)-formyl-N(1)-(5-phospho-D-ribosyl)glycinamide: step 1/2. In terms of biological role, part of the phosphoribosylformylglycinamidine synthase complex involved in the purines biosynthetic pathway. Catalyzes the ATP-dependent conversion of formylglycinamide ribonucleotide (FGAR) and glutamine to yield formylglycinamidine ribonucleotide (FGAM) and glutamate. The FGAM synthase complex is composed of three subunits. PurQ produces an ammonia molecule by converting glutamine to glutamate. PurL transfers the ammonia molecule to FGAR to form FGAM in an ATP-dependent manner. PurS interacts with PurQ and PurL and is thought to assist in the transfer of the ammonia molecule from PurQ to PurL. The chain is Phosphoribosylformylglycinamidine synthase subunit PurS from Archaeoglobus fulgidus (strain ATCC 49558 / DSM 4304 / JCM 9628 / NBRC 100126 / VC-16).